The sequence spans 495 residues: Protein adenylyltransferase Fic (495 aa).

The disordered stretch occupies residues 1 to 27; the sequence is MGTEAEQPSPPSPPAQQQEQTNPPLWN. Residues 36 to 55 traverse the membrane as a helical segment; the sequence is LYRLVLFFIAGSLAAWTIHA. 2 TPR repeats span residues 121–154 and 155–189; these read ALVSLRMAQDMYLAGKDDKASRLFEHALALAPRH and PEVLLRYGEFLEHSQRNIVLADQYYFQALTISPSN. An Inhibitory (S/T)XXXE(G/N) motif motif is present at residues 246–251; sequence SVGIEG. ATP contacts are provided by residues glutamate 250 and 331–334; that span reads VGGH. Residues 300–435 enclose the Fido domain; the sequence is ITIKDILELH…IRPFVRFIAD (136 aa). Histidine 378 is an active-site residue. ATP is bound by residues 382-389, 414-415, and asparagine 422; these read DGNGRTSR and YY.

The protein belongs to the fic family. As to quaternary structure, homodimer.

It is found in the membrane. The catalysed reaction is L-tyrosyl-[protein] + ATP = O-(5'-adenylyl)-L-tyrosyl-[protein] + diphosphate. It catalyses the reaction L-threonyl-[protein] + ATP = 3-O-(5'-adenylyl)-L-threonyl-[protein] + diphosphate. It carries out the reaction 3-O-(5'-adenylyl)-L-threonyl-[protein] + H2O = L-threonyl-[protein] + AMP + H(+). Its activity is regulated as follows. The side chain of Glu-250 determines which of the two opposing activities (AMPylase or de-AMPylase) will take place. In response to endoplasmic reticulum stress, mediates de-AMPylase activity. Adenylyltransferase activity is inhibited by the inhibitory helix present at the N-terminus: Glu-250 binds ATP and competes with ATP-binding at Arg-389, thereby preventing adenylyltransferase activity. In unstressed cells, disengagement of Glu-250 promotes adenylyltransferase activity. Activation dissociates ATP-binding from Glu-250, allowing ordered binding of the entire ATP moiety with the alpha-phosphate in an orientation that is productive for accepting an incoming target hydroxyl side chain. Its function is as follows. Protein that can both mediate the addition of adenosine 5'-monophosphate (AMP) to specific residues of target proteins (AMPylation), and the removal of the same modification from target proteins (de-AMPylation), depending on the context. The side chain of Glu-250 determines which of the two opposing activities (AMPylase or de-AMPylase) will take place. Acts as a key regulator of the unfolded protein response (UPR) by mediating AMPylation or de-AMPylation of Hsc70-3/BiP. In unstressed cells, acts as an adenylyltransferase by mediating AMPylation of Hsc70-3/BiP at 'Thr-518', thereby inactivating it. In response to endoplasmic reticulum stress, acts as a phosphodiesterase by mediating removal of ATP (de-AMPylation) from Hsc70-3/BiP at 'Thr-518', leading to restore HSPA5/BiP activity. The chain is Protein adenylyltransferase Fic from Drosophila yakuba (Fruit fly).